We begin with the raw amino-acid sequence, 539 residues long: Phosphoenolpyruvate carboxykinase (ATP) (539 aa).

The substrate site is built by arginine 64, tyrosine 206, and lysine 212. Residues lysine 212, histidine 231, and 247-255 (GLSGTGKTT) each bind ATP. Residues lysine 212 and histidine 231 each contribute to the Mn(2+) site. Position 268 (aspartate 268) interacts with Mn(2+). Residues glutamate 296, arginine 332, 448-449 (RI), and threonine 454 each bind ATP. Arginine 332 is a substrate binding site.

This sequence belongs to the phosphoenolpyruvate carboxykinase (ATP) family. As to quaternary structure, monomer. Mn(2+) serves as cofactor.

It localises to the cytoplasm. The enzyme catalyses oxaloacetate + ATP = phosphoenolpyruvate + ADP + CO2. Its pathway is carbohydrate biosynthesis; gluconeogenesis. Functionally, involved in the gluconeogenesis. Catalyzes the conversion of oxaloacetate (OAA) to phosphoenolpyruvate (PEP) through direct phosphoryl transfer between the nucleoside triphosphate and OAA. The polypeptide is Phosphoenolpyruvate carboxykinase (ATP) (Edwardsiella ictaluri (strain 93-146)).